Consider the following 619-residue polypeptide: 1-deoxy-D-xylulose-5-phosphate synthase (619 aa).

Residues His-74 and 115 to 117 (GHS) contribute to the thiamine diphosphate site. Asp-146 serves as a coordination point for Mg(2+). Thiamine diphosphate contacts are provided by residues 147 to 148 (GA), Asn-175, Tyr-285, and Glu-365. Asn-175 serves as a coordination point for Mg(2+).

The protein belongs to the transketolase family. DXPS subfamily. Homodimer. Requires Mg(2+) as cofactor. Thiamine diphosphate is required as a cofactor.

It carries out the reaction D-glyceraldehyde 3-phosphate + pyruvate + H(+) = 1-deoxy-D-xylulose 5-phosphate + CO2. Its pathway is metabolic intermediate biosynthesis; 1-deoxy-D-xylulose 5-phosphate biosynthesis; 1-deoxy-D-xylulose 5-phosphate from D-glyceraldehyde 3-phosphate and pyruvate: step 1/1. In terms of biological role, catalyzes the acyloin condensation reaction between C atoms 2 and 3 of pyruvate and glyceraldehyde 3-phosphate to yield 1-deoxy-D-xylulose-5-phosphate (DXP). The protein is 1-deoxy-D-xylulose-5-phosphate synthase of Clostridium perfringens (strain ATCC 13124 / DSM 756 / JCM 1290 / NCIMB 6125 / NCTC 8237 / Type A).